A 673-amino-acid polypeptide reads, in one-letter code: Methionine--tRNA ligase (673 aa).

The 'HIGH' region motif lies at 13–23 (PYANGSIHLGH). The Zn(2+) site is built by C144, C147, C157, and C160. Residues 330–334 (KMSKS) carry the 'KMSKS' region motif. K333 contacts ATP. Residues 572-673 (DFAQLDLRIA…GRARAGMTIS (102 aa)) form the tRNA-binding domain.

The protein belongs to the class-I aminoacyl-tRNA synthetase family. MetG type 1 subfamily. Homodimer. The cofactor is Zn(2+).

The protein resides in the cytoplasm. It carries out the reaction tRNA(Met) + L-methionine + ATP = L-methionyl-tRNA(Met) + AMP + diphosphate. Functionally, is required not only for elongation of protein synthesis but also for the initiation of all mRNA translation through initiator tRNA(fMet) aminoacylation. The protein is Methionine--tRNA ligase of Dichelobacter nodosus (strain VCS1703A).